Here is a 591-residue protein sequence, read N- to C-terminus: Aspartate--tRNA(Asp/Asn) ligase (591 aa).

Residue Glu175 participates in L-aspartate binding. The tract at residues 199-202 is aspartate; the sequence is QQFK. Arg221 and His453 together coordinate L-aspartate. Residue 221 to 223 participates in ATP binding; the sequence is RDE. Glu486 contributes to the ATP binding site. Arg493 lines the L-aspartate pocket. ATP is bound at residue 538-541; the sequence is GIDR.

This sequence belongs to the class-II aminoacyl-tRNA synthetase family. Type 1 subfamily. Homodimer.

The protein localises to the cytoplasm. It catalyses the reaction tRNA(Asx) + L-aspartate + ATP = L-aspartyl-tRNA(Asx) + AMP + diphosphate. Functionally, aspartyl-tRNA synthetase with relaxed tRNA specificity since it is able to aspartylate not only its cognate tRNA(Asp) but also tRNA(Asn). Reaction proceeds in two steps: L-aspartate is first activated by ATP to form Asp-AMP and then transferred to the acceptor end of tRNA(Asp/Asn). The sequence is that of Aspartate--tRNA(Asp/Asn) ligase from Cereibacter sphaeroides (strain ATCC 17025 / ATH 2.4.3) (Rhodobacter sphaeroides).